Consider the following 49-residue polypeptide: MARFPEAEERILNKKICMKCSARNAVRATRCRKCGYTNLRVKNKDVRRG.

Belongs to the eukaryotic ribosomal protein eL40 family.

This is Large ribosomal subunit protein eL40 from Methanococcoides burtonii (strain DSM 6242 / NBRC 107633 / OCM 468 / ACE-M).